Consider the following 468-residue polypeptide: SVGFKAGVKEYKLTYYTPEYQTKDTDILAAFRVTPQPGVPPEEAGAAVAAESSTGTWTTVWTDGLTSLDRYKGRCYRIERVVGEKDQYIAYVAYPLDLFEEGSVTNMFTSIVGNVFGFKALRALRLEDLRIPPAYIKTFQGPPHGIQVERDKLNKYGRPLLGCTIKPKLGLSAKNYGRAVYECLRGGLDFTKDDENVNSQPFMRWRDRFLFCAEALYKAQAETGEIKGHYLNATAGTCEEMIKRAVFARELGVPIVMHDYLTGGFTANTSLAHYCRDNGLLLHIHRAMHAVIDRQKNHGMHFRVLAKALRMSGGDHIHAGTVVGKLEGERDITLGFVDLLRDDFVEQDRSRGIYFTQDWVSLPGVLPVASGGIHVWHMPALTEIFGDDSVLQFGGGTLGHPWGNAPGAVANRVALEACVKARNEGRDLAQEGNEIIREACKWSPELAAACEVWKEIVFNFAAVDVLDK.

At K5 the chain carries N6,N6,N6-trimethyllysine. 2 residues coordinate substrate: N114 and T164. The active-site Proton acceptor is K166. Position 168 (K168) interacts with substrate. 3 residues coordinate Mg(2+): K192, D194, and E195. Residue K192 is modified to N6-carboxylysine. H285 functions as the Proton acceptor in the catalytic mechanism. Substrate-binding residues include R286, H318, and S370.

It belongs to the RuBisCO large chain family. Type I subfamily. As to quaternary structure, heterohexadecamer of 8 large chains and 8 small chains; disulfide-linked. The disulfide link is formed within the large subunit homodimers. Mg(2+) serves as cofactor. In terms of processing, the disulfide bond which can form in the large chain dimeric partners within the hexadecamer appears to be associated with oxidative stress and protein turnover.

It localises to the plastid. It is found in the chloroplast. The enzyme catalyses 2 (2R)-3-phosphoglycerate + 2 H(+) = D-ribulose 1,5-bisphosphate + CO2 + H2O. The catalysed reaction is D-ribulose 1,5-bisphosphate + O2 = 2-phosphoglycolate + (2R)-3-phosphoglycerate + 2 H(+). Functionally, ruBisCO catalyzes two reactions: the carboxylation of D-ribulose 1,5-bisphosphate, the primary event in carbon dioxide fixation, as well as the oxidative fragmentation of the pentose substrate in the photorespiration process. Both reactions occur simultaneously and in competition at the same active site. The polypeptide is Ribulose bisphosphate carboxylase large chain (Solandra grandiflora (Chalice vine)).